A 304-amino-acid polypeptide reads, in one-letter code: D-alanine--D-alanine ligase (304 aa).

The ATP-grasp domain occupies 107–300 (KRLWQGSGLP…FDELVARILG (194 aa)). 134–186 (VGYPVIVKPAREGSSLGMSRVEGPEELAEAYRVAAAYDDTVLAEAWVEGEEYT) provides a ligand contact to ATP. 3 residues coordinate Mg(2+): Asp254, Glu267, and Asn269.

Belongs to the D-alanine--D-alanine ligase family. It depends on Mg(2+) as a cofactor. The cofactor is Mn(2+).

It localises to the cytoplasm. The catalysed reaction is 2 D-alanine + ATP = D-alanyl-D-alanine + ADP + phosphate + H(+). It participates in cell wall biogenesis; peptidoglycan biosynthesis. In terms of biological role, cell wall formation. The chain is D-alanine--D-alanine ligase from Halorhodospira halophila (strain DSM 244 / SL1) (Ectothiorhodospira halophila (strain DSM 244 / SL1)).